We begin with the raw amino-acid sequence, 330 residues long: Tryptophan--tRNA ligase (330 aa).

Residues 10–12 (QAT) and 18–19 (GN) contribute to the ATP site. The 'HIGH' region signature appears at 11 to 19 (ATGSLHLGN). An L-tryptophan-binding site is contributed by Asp134. ATP is bound by residues 146 to 148 (GED), Ile186, and 195 to 199 (KMSKS). Positions 195–199 (KMSKS) match the 'KMSKS' region motif.

This sequence belongs to the class-I aminoacyl-tRNA synthetase family. As to quaternary structure, homodimer.

The protein localises to the cytoplasm. It catalyses the reaction tRNA(Trp) + L-tryptophan + ATP = L-tryptophyl-tRNA(Trp) + AMP + diphosphate + H(+). In terms of biological role, catalyzes the attachment of tryptophan to tRNA(Trp). This chain is Tryptophan--tRNA ligase, found in Rickettsia felis (strain ATCC VR-1525 / URRWXCal2) (Rickettsia azadi).